Consider the following 497-residue polypeptide: UPF0371 protein DIP2346 (497 aa).

It belongs to the UPF0371 family.

This is UPF0371 protein DIP2346 from Corynebacterium diphtheriae (strain ATCC 700971 / NCTC 13129 / Biotype gravis).